A 436-amino-acid chain; its full sequence is 3-oxo-tetronate kinase (436 aa).

ATP-binding positions include serine 272, 372-375 (GGET), and glycine 415.

The protein belongs to the four-carbon acid sugar kinase family.

It carries out the reaction 3-dehydro-L-erythronate + ATP = 3-dehydro-4-O-phospho-L-erythronate + ADP + H(+). It catalyses the reaction 3-dehydro-D-erythronate + ATP = 3-dehydro-4-O-phospho-D-erythronate + ADP + H(+). Functionally, catalyzes the ATP-dependent phosphorylation of 3-oxo-tetronate to 3-oxo-tetronate 4-phosphate. The protein is 3-oxo-tetronate kinase of Brucella melitensis biotype 1 (strain ATCC 23456 / CCUG 17765 / NCTC 10094 / 16M).